The chain runs to 224 residues: Phosphoribosylformylglycinamidine synthase subunit PurQ (224 aa).

One can recognise a Glutamine amidotransferase type-1 domain in the interval Met-1–Ala-224. Catalysis depends on Cys-84, which acts as the Nucleophile. Active-site residues include His-196 and Glu-198.

In terms of assembly, part of the FGAM synthase complex composed of 1 PurL, 1 PurQ and 2 PurS subunits.

The protein localises to the cytoplasm. The enzyme catalyses N(2)-formyl-N(1)-(5-phospho-beta-D-ribosyl)glycinamide + L-glutamine + ATP + H2O = 2-formamido-N(1)-(5-O-phospho-beta-D-ribosyl)acetamidine + L-glutamate + ADP + phosphate + H(+). The catalysed reaction is L-glutamine + H2O = L-glutamate + NH4(+). The protein operates within purine metabolism; IMP biosynthesis via de novo pathway; 5-amino-1-(5-phospho-D-ribosyl)imidazole from N(2)-formyl-N(1)-(5-phospho-D-ribosyl)glycinamide: step 1/2. Its function is as follows. Part of the phosphoribosylformylglycinamidine synthase complex involved in the purines biosynthetic pathway. Catalyzes the ATP-dependent conversion of formylglycinamide ribonucleotide (FGAR) and glutamine to yield formylglycinamidine ribonucleotide (FGAM) and glutamate. The FGAM synthase complex is composed of three subunits. PurQ produces an ammonia molecule by converting glutamine to glutamate. PurL transfers the ammonia molecule to FGAR to form FGAM in an ATP-dependent manner. PurS interacts with PurQ and PurL and is thought to assist in the transfer of the ammonia molecule from PurQ to PurL. This chain is Phosphoribosylformylglycinamidine synthase subunit PurQ, found in Saccharolobus solfataricus (strain ATCC 35092 / DSM 1617 / JCM 11322 / P2) (Sulfolobus solfataricus).